A 316-amino-acid polypeptide reads, in one-letter code: Malate dehydrogenase (316 aa).

NAD(+)-binding positions include 12–17 (GAGNIG) and D36. Substrate is bound by residues R85 and R91. NAD(+)-binding positions include N98 and 121-123 (VTN). Positions 123 and 154 each coordinate substrate. H178 (proton acceptor) is an active-site residue.

This sequence belongs to the LDH/MDH superfamily. MDH type 3 family.

The catalysed reaction is (S)-malate + NAD(+) = oxaloacetate + NADH + H(+). Catalyzes the reversible oxidation of malate to oxaloacetate. The chain is Malate dehydrogenase from Wolbachia pipientis wMel.